A 537-amino-acid polypeptide reads, in one-letter code: Oocyte zinc finger protein XlCOF29 (537 aa).

Residues 1–21 (MGMSEKASDTGMKGKKKDKNE) form a disordered region. C2H2-type zinc fingers lie at residues 375–397 (FTCS…LKSH), 403–425 (FSCS…RRLH), 431–453 (FPCA…SKTH), 459–481 (YSCT…KKRH), 487–509 (YTCS…VRIH), and 515–537 (FSCS…ERMH).

Belongs to the krueppel C2H2-type zinc-finger protein family.

It is found in the nucleus. Its function is as follows. May be involved in transcriptional regulation. This is Oocyte zinc finger protein XlCOF29 from Xenopus laevis (African clawed frog).